The sequence spans 1074 residues: MSITDLSPTLGILRSLYPHVQVLVDFADDIVFREGHKATLIEESDTSHFKSFVRGIFVCFHKELQQVPSCNQICTLPELLAFVLNSVKRKRKRNVLAHGYNFQSLAQEERDADQFKLQGDVTQSAAYVHGSDLWRKVSMRLGTDITRYLFESCSVFVAVPPSCLFQVCGIPIYDCFSLATASLGFSLQSRGCRERCLGVNSMKRRAFNVKRYLRKRKTETDQKDEARVCSGKRRRVMEEDKVSCETMQDGESGKTTLVQKQPGSKKRSEMEATLLPLEGGPSWRSGTFPPLPPSQSFMRTLGFLYGGRGMRSFLLNRKKKTAEGFRKIQGRDLIRIVFFEGVLYLNGLERKPKKLPRRFFNMVPLFSQLLRQHRRCPYSRLLQKTCPLVGIKDAGQAELSSFLPQHCGSHRVYLFVRECLLAVIPQELWGSEHNRLLYFARVRFFLRSGKFERLSVAELMWKIKVNNCDWLKISKTGRVPPSELSYRTQILGQFLAWLLDGFVVGLVRACFYATESMGQKNAIRFYRQEVWAKLQDLAFRSHISKGQMVELTPDQVAALPKSTIISRLRFIPKTDGMRPITRVIGADAKTRLYQSHVRDLLDMLRACVCSTPSLLGSTVWGMTDIHKVLSSIAPAQKEKPQPLYFVKMDVSGAYESLPHNKLIEVINQVLTPVLNEVFTIRRFAKIWADSHEGLKKAFIRQADFLEANMGSINMKQFLTSLQKKGKLHHSVLVEQIFSSDLEGKDALQFFTQILKGSVIQFGKKTYRQCQGVPQGSAVSSVLCCLCYGHMENVLFKDIINKKSCLMRLVDDFLLITPNLHDAQTFLKILLAGVPQYGLVVNPQKVVVNFEDYGSTDSCPGLRVLPLRCLFPWCGLLLDTHTLDIYKDYSSYADLSLRYSLTLGSCHSAGHQMKRKLMGILRLKCHALFLDLKTNSLEAIYKNIYKLLLLHALRFHVCAQSLPFGQSVAKNPAYFLLMIWDMVEYTNYLIRLSNNGLISGSTSQTGSVQYEAVELLFCLSFLLVLSKHRRLYKDLLLHLHKRKRRLEQCLGDLRLARVRQAANPRNPLDFLAIKT.

Positions 240-265 (DKVSCETMQDGESGKTTLVQKQPGSK) are disordered. Positions 253–262 (GKTTLVQKQP) are enriched in polar residues. Residues 300 to 305 (TLGFLY) carry the TFLY; involved in RNA binding motif. Interaction with RNA template regions lie at residues 355–360 (LPRRFF) and 461–486 (WKIK…ELSY). In terms of domain architecture, Reverse transcriptase spans 552 to 877 (TPDQVAALPK…CLFPWCGLLL (326 aa)). The Mg(2+) site is built by Asp-649, Asp-810, and Asp-811.

The protein belongs to the reverse transcriptase family. Telomerase subfamily. Catalytic subunit of the telomerase holoenzyme complex composed minimally of TERT and the telomerase RNA template component (TERC). As to expression, detected at highest levels in gill, ovary and testis, and at lower levels in brain, eye, heart, skin, spleen and stomach.

It is found in the nucleus. The protein localises to the chromosome. Its subcellular location is the telomere. It carries out the reaction DNA(n) + a 2'-deoxyribonucleoside 5'-triphosphate = DNA(n+1) + diphosphate. Its function is as follows. Telomerase is a ribonucleoprotein enzyme essential for the replication of chromosome termini in most eukaryotes. It elongates telomeres. It is a reverse transcriptase that adds simple sequence repeats to chromosome ends by copying a template sequence within the RNA component of the enzyme. The polypeptide is Telomerase reverse transcriptase (Takifugu rubripes (Japanese pufferfish)).